The primary structure comprises 311 residues: NAD kinase (311 aa).

Asp67 (proton acceptor) is an active-site residue. NAD(+)-binding positions include 67–68 (DG), Arg72, 140–141 (ND), Arg151, Asp170, 181–186 (TAYSLS), and Gln240. Positions 278–287 (LKEGGSRQDD) are enriched in basic and acidic residues. Residues 278–311 (LKEGGSRQDDENPAATVNPETDSKYPHSHPGSTG) form a disordered region.

Belongs to the NAD kinase family. It depends on a divalent metal cation as a cofactor.

It is found in the cytoplasm. It carries out the reaction NAD(+) + ATP = ADP + NADP(+) + H(+). Its function is as follows. Involved in the regulation of the intracellular balance of NAD and NADP, and is a key enzyme in the biosynthesis of NADP. Catalyzes specifically the phosphorylation on 2'-hydroxyl of the adenosine moiety of NAD to yield NADP. The sequence is that of NAD kinase from Moorella thermoacetica (strain ATCC 39073 / JCM 9320).